The primary structure comprises 971 residues: Nuclear factor NF-kappa-B p105 subunit (971 aa).

Positions 40-365 constitute an RHD domain; the sequence is PYLQILEQPK…EVQRKRQKLM (326 aa). C59 carries the S-nitrosocysteine; alternate modification. Residue C59 is the site of S-(15-deoxy-Delta12,14-prostaglandin J2-9-yl)cysteine; alternate attachment. K323 is covalently cross-linked (Glycyl lysine isopeptide (Lys-Gly) (interchain with G-Cter in SUMO2)). S335 bears the Phosphoserine; by PKA mark. A Nuclear localization signal motif is present at residues 358–363; that stretch reads QRKRQK. Residues 370–392 are GRR; sequence DSFGGGSGAGAGGGGMFGSGGGG. Residues 433 to 971 form an interaction with CFLAR region; the sequence is INTKFKNGPK…GQEGPIEGKI (539 aa). K438 is modified (N6-acetyllysine; by EP300). Positions 439 to 470 are disordered; that stretch reads NGPKDCAKSDDEESLTLPEKETEGEGPSLPMA. The residue at position 447 (S447) is a Phosphoserine. ANK repeat units lie at residues 538–567, 577–606, 610–639, 646–675, 680–710, and 714–743; these read NGDS…GLIS, LYQT…DLSL, WGNS…AAPL, EGLN…EVNA, SGRT…HVDS, and DGTT…DPLV. Residues 646-680 form an essential for interaction with HIF1AN region; that stretch reads EGLNAIHIAVMSNSLPCLLLLVAAGAEVNAQEQKS. N674 is modified ((3S)-3-hydroxyasparagine; by HIF1AN). Phosphoserine is present on S755. Residues 767 to 797 form an ANK 7 repeat; that stretch reads PGTTPLDMAANWQVFDILNGKPYEPVFTSDD. In terms of domain architecture, Death spans 801–888; sequence QGDMKQLTED…EAIEVIQAAF (88 aa). S896 carries the phosphoserine modification. S910 carries the post-translational modification Phosphoserine; by GSK3-beta; in vitro. S926 is modified (phosphoserine). S930 and S935 each carry phosphoserine; by IKKB. S940 is modified (phosphoserine). T946 bears the Phosphothreonine mark.

In terms of assembly, component of the NF-kappa-B p65-p50 complex. Homodimer; component of the NF-kappa-B p50-p50 complex. Component of the NF-kappa-B p105-p50 complex. Component of the NF-kappa-B p50-c-Rel complex. Component of a complex consisting of the NF-kappa-B p50-p50 homodimer and BCL3. Also interacts with MAP3K8. NF-kappa-B p50 subunit interacts with NCOA3 coactivator, which may coactivate NF-kappa-B dependent expression via its histone acetyltransferase activity. Interacts with TSC22D3; this interaction prevents nuclear translocation and DNA-binding. Interacts with SPAG9 and UNC5CL. NFKB1/p105 interacts with CFLAR; the interaction inhibits p105 processing into p50. NFKB1/p105 forms a ternary complex with MAP3K8 and TNIP2. Interacts with GSK3B; the interaction prevents processing of p105 to p50. NFKB1/p50 interacts with NFKBIE. NFKB1/p50 interacts with NFKBIZ. Nuclear factor NF-kappa-B p50 subunit interacts with NFKBID. Directly interacts with MEN1. Interacts with HIF1AN. Interacts with FEM1AA; interaction is direct. In terms of processing, generation of the NF-kappa-B p50 (Nuclear factor NF-kappa-B p50 subunit) transcription factor takes place both cotranslationally and post-translationally via non-mutually exclusive mechanisms. A cotranslational processing allows the production of both p50 and p105 (Nuclear factor NF-kappa-B p105 subunit) from a single NFKB1 mRNA. While translation occurs, the particular unfolded structure after the GRR repeat region acts as a substrate for the proteasome, promoting degradation of the C-terminus. The GRR acts as a proteasomal 'stop signal', protecting the region upstream of the GRR from degradation and promoting generation of p50. It is unclear if limited proteasome degradation during cotranslational processing depends on ubiquitination. NF-kappa-B p50 is also generated post-translationally following ubiquitination by the KPC complex, leading to limited processing by the proteasome downstream of the GRR region, thereby generating p50. Phosphorylation at the C-terminus by IKBKB/IKKB acts as a signal for ubiquitination and promotes either complete degradation or processing to generate the NF-kappa-B p50 (Nuclear factor NF-kappa-B p50 subunit). Phosphorylation at Ser-910 primes p105 for proteolytic processing in response to TNF-alpha stimulation. Phosphorylation at Ser-926, Ser-930 and Ser-935 are required for BTRC/BTRCP-mediated ubiquitination and proteolysis. Phosphorylation at Ser-930 is also required for ubiquitination by the KPC complex and limited processing to generate NF-kappa-B p50 (Nuclear factor NF-kappa-B p50 subunit). Post-translationally, polyubiquitinated at multiple Lys residues in the C-terminus. Polyubiquitinated by the SCF(FBXW11) and SCF(BTRC) complexes following phosphorylation at Ser-926, Ser-930 and Ser-935, leading to its complete degradation. In contrast, polyubiquitination by the KPC complex following phosphorylation at Ser-930 leads to limited proteosomal processing and generation of the active NF-kappa-B p50 (Nuclear factor NF-kappa-B p50 subunit). In terms of processing, S-nitrosylation of Cys-59 affects DNA binding. The covalent modification of cysteine by 15-deoxy-Delta12,14-prostaglandin-J2 is autocatalytic and reversible. It may occur as an alternative to other cysteine modifications, such as S-nitrosylation and S-palmitoylation.

The protein resides in the cytoplasm. The protein localises to the nucleus. Functionally, NF-kappa-B is a pleiotropic transcription factor present in almost all cell types and is the endpoint of a series of signal transduction events that are initiated by a vast array of stimuli related to many biological processes such as inflammation, immunity, differentiation, cell growth, tumorigenesis and apoptosis. NF-kappa-B is a homo- or heterodimeric complex formed by the Rel-like domain-containing proteins RELA/p65, RELB, NFKB1/p105, NFKB1/p50, REL and NFKB2/p52 and the heterodimeric p65-p50 complex appears to be most abundant one. The dimers bind at kappa-B sites in the DNA of their target genes and the individual dimers have distinct preferences for different kappa-B sites that they can bind with distinguishable affinity and specificity. Different dimer combinations act as transcriptional activators or repressors, respectively. NF-kappa-B is controlled by various mechanisms of post-translational modification and subcellular compartmentalization as well as by interactions with other cofactors or corepressors. NF-kappa-B complexes are held in the cytoplasm in an inactive state complexed with members of the NF-kappa-B inhibitor (I-kappa-B) family. In a conventional activation pathway, I-kappa-B is phosphorylated by I-kappa-B kinases (IKKs) in response to different activators, subsequently degraded thus liberating the active NF-kappa-B complex which translocates to the nucleus. NF-kappa-B heterodimeric p65-p50 and RelB-p50 complexes are transcriptional activators. The NF-kappa-B p50-p50 homodimer is a transcriptional repressor, but can act as a transcriptional activator when associated with BCL3. NFKB1 appears to have dual functions such as cytoplasmic retention of attached NF-kappa-B proteins by p105 and generation of p50 by a cotranslational processing. The proteasome-mediated process ensures the production of both p50 and p105 and preserves their independent function, although processing of NFKB1/p105 also appears to occur post-translationally. p50 binds to the kappa-B consensus sequence 5'-GGRNNYYCC-3', located in the enhancer region of genes involved in immune response and acute phase reactions. Plays a role in the regulation of apoptosis. In a complex with MAP3K8, NFKB1/p105 represses MAP3K8-induced MAPK signaling; active MAP3K8 is released by proteasome-dependent degradation of NFKB1/p105. P105 is the precursor of the active p50 subunit (Nuclear factor NF-kappa-B p50 subunit) of the nuclear factor NF-kappa-B. Acts as a cytoplasmic retention of attached NF-kappa-B proteins by p105. In terms of biological role, constitutes the active form, which associates with RELA/p65 to form the NF-kappa-B p65-p50 complex to form a transcription factor. Together with RELA/p65, binds to the kappa-B consensus sequence 5'-GGRNNYYCC-3', located in the enhancer region of genes involved in immune response and acute phase reactions. Its function is as follows. Isoform 3 (p98) (but not p84 or p105) acts as a transactivator of NF-kappa-B-regulated gene expression. Functionally, acts as an inhibitor of transactivation of p50 NF-kappa-B subunit, probably by sequestering it in the cytoplasm. The polypeptide is Nuclear factor NF-kappa-B p105 subunit (Nfkb1) (Mus musculus (Mouse)).